We begin with the raw amino-acid sequence, 472 residues long: 3-isopropylmalate dehydratase large subunit (472 aa).

3 residues coordinate [4Fe-4S] cluster: cysteine 347, cysteine 407, and cysteine 410.

Belongs to the aconitase/IPM isomerase family. LeuC type 1 subfamily. As to quaternary structure, heterodimer of LeuC and LeuD. It depends on [4Fe-4S] cluster as a cofactor.

The catalysed reaction is (2R,3S)-3-isopropylmalate = (2S)-2-isopropylmalate. The protein operates within amino-acid biosynthesis; L-leucine biosynthesis; L-leucine from 3-methyl-2-oxobutanoate: step 2/4. In terms of biological role, catalyzes the isomerization between 2-isopropylmalate and 3-isopropylmalate, via the formation of 2-isopropylmaleate. The chain is 3-isopropylmalate dehydratase large subunit from Bacillus subtilis (strain 168).